A 229-amino-acid polypeptide reads, in one-letter code: Rhamnosyl O-methyltransferase (229 aa).

Positions 1–23 (MERVRQMFSCVSGMIYRPTDSIA) are cleaved as a signal peptide.

Belongs to the rhamnosyl O-methyltransferase family.

Its function is as follows. Catalyzes the O-methylation of the hydroxyl group located on C-2 of the first rhamnosyl residue linked to the phenolic group of glycosylated phenolphthiocerol dimycocerosates (PGL) and p-hydroxybenzoic acid derivatives (p-HBAD). The polypeptide is Rhamnosyl O-methyltransferase (Mycobacterium leprae (strain TN)).